Reading from the N-terminus, the 641-residue chain is 1-deoxy-D-xylulose-5-phosphate synthase (641 aa).

Residues His79 and Ala120–Ser122 each bind thiamine diphosphate. Asp151 serves as a coordination point for Mg(2+). Thiamine diphosphate-binding positions include Gly152–Ala153, Asn180, Tyr290, and Glu372. Residue Asn180 coordinates Mg(2+).

It belongs to the transketolase family. DXPS subfamily. In terms of assembly, homodimer. Requires Mg(2+) as cofactor. It depends on thiamine diphosphate as a cofactor.

It catalyses the reaction D-glyceraldehyde 3-phosphate + pyruvate + H(+) = 1-deoxy-D-xylulose 5-phosphate + CO2. It participates in metabolic intermediate biosynthesis; 1-deoxy-D-xylulose 5-phosphate biosynthesis; 1-deoxy-D-xylulose 5-phosphate from D-glyceraldehyde 3-phosphate and pyruvate: step 1/1. Its function is as follows. Catalyzes the acyloin condensation reaction between C atoms 2 and 3 of pyruvate and glyceraldehyde 3-phosphate to yield 1-deoxy-D-xylulose-5-phosphate (DXP). This is 1-deoxy-D-xylulose-5-phosphate synthase from Bradyrhizobium sp. (strain ORS 278).